Consider the following 374-residue polypeptide: MADNSKTRVVVGMSGGVDSSVTALLLKEQGYDVIGIFMKNWDDTDENGVCTATEDYKDVAKVADQIGIPYYSVNFEKEYWDRVFEYFLAEYRLGRTPNPDVMCNKEIKFKAFLDYAMQLGADYVATGHYAQVETDENGVVHMLRGIDNNKDQTYFLSQLSQAQLAKTMFPLGGMEKSEVRAIAERAGLATAKKKDSTGVCFIGEKNFKEFLSNYLPAKKGNMVTEDGEIKGQHDGLMYYTIGQRQGLGIGGGGKTQEPWFVIGKDLTTNTLYVGQGFHHEKLYATHLEASEVHFTVDTPMPKEFDCTAKFRYRQADIPVHVSLSEDGTKATVTFKEPARAVTPGQAVVFYDGMECLGGGLIDRAYQDEKELQYV.

ATP is bound by residues Gly12–Ser19 and Met38. The interaction with target base in tRNA stretch occupies residues Asn98 to Asp100. Residue Cys103 is the Nucleophile of the active site. Residues Cys103 and Cys200 are joined by a disulfide bond. Position 127 (Gly127) interacts with ATP. Residues Lys150–Gln152 form an interaction with tRNA region. Residue Cys200 is the Cysteine persulfide intermediate of the active site. The interval Arg311–Tyr312 is interaction with tRNA.

It belongs to the MnmA/TRMU family.

It is found in the cytoplasm. The enzyme catalyses S-sulfanyl-L-cysteinyl-[protein] + uridine(34) in tRNA + AH2 + ATP = 2-thiouridine(34) in tRNA + L-cysteinyl-[protein] + A + AMP + diphosphate + H(+). Functionally, catalyzes the 2-thiolation of uridine at the wobble position (U34) of tRNA, leading to the formation of s(2)U34. This is tRNA-specific 2-thiouridylase MnmA from Enterococcus faecalis (strain ATCC 700802 / V583).